We begin with the raw amino-acid sequence, 301 residues long: N-acetylmuramic acid 6-phosphate etherase (301 aa).

The SIS domain maps to 55–215; the sequence is IADALRAGGR…STISMVALGK (161 aa). Glu-83 (proton donor) is an active-site residue. Residue Glu-111 is part of the active site.

The protein belongs to the GCKR-like family. MurNAc-6-P etherase subfamily. As to quaternary structure, homodimer.

It carries out the reaction N-acetyl-D-muramate 6-phosphate + H2O = N-acetyl-D-glucosamine 6-phosphate + (R)-lactate. The protein operates within amino-sugar metabolism; 1,6-anhydro-N-acetylmuramate degradation. Its pathway is amino-sugar metabolism; N-acetylmuramate degradation. It functions in the pathway cell wall biogenesis; peptidoglycan recycling. Functionally, specifically catalyzes the cleavage of the D-lactyl ether substituent of MurNAc 6-phosphate, producing GlcNAc 6-phosphate and D-lactate. Together with AnmK, is also required for the utilization of anhydro-N-acetylmuramic acid (anhMurNAc) either imported from the medium or derived from its own cell wall murein, and thus plays a role in cell wall recycling. This Burkholderia lata (strain ATCC 17760 / DSM 23089 / LMG 22485 / NCIMB 9086 / R18194 / 383) protein is N-acetylmuramic acid 6-phosphate etherase.